Here is a 357-residue protein sequence, read N- to C-terminus: Peptide chain release factor 1 (357 aa).

Position 232 is an N5-methylglutamine (Q232). Basic and acidic residues predominate over residues 281–305; sequence DRQHNEMAADRRSQVGSGDRSERIR. The segment at 281 to 309 is disordered; sequence DRQHNEMAADRRSQVGSGDRSERIRTYNF.

This sequence belongs to the prokaryotic/mitochondrial release factor family. Post-translationally, methylated by PrmC. Methylation increases the termination efficiency of RF1.

The protein resides in the cytoplasm. In terms of biological role, peptide chain release factor 1 directs the termination of translation in response to the peptide chain termination codons UAG and UAA. The sequence is that of Peptide chain release factor 1 from Nitratidesulfovibrio vulgaris (strain DSM 19637 / Miyazaki F) (Desulfovibrio vulgaris).